An 86-amino-acid polypeptide reads, in one-letter code: Progonadoliberin-2 (86 aa).

The signal sequence occupies residues 1 to 24 (MVHICRLLVLMGMLLCLSAQFASS). A Pyrrolidone carboxylic acid modification is found at Gln-25. The residue at position 34 (Gly-34) is a Glycine amide.

This sequence belongs to the GnRH family.

It localises to the secreted. Stimulates the secretion of gonadotropins. The chain is Progonadoliberin-2 (gnrh2) from Rutilus rutilus (Roach).